Reading from the N-terminus, the 245-residue chain is Small ribosomal subunit protein uS3 (245 aa).

The 69-residue stretch at 39–107 (IRKAIREKLK…EVRVNLVEIR (69 aa)) folds into the KH type-2 domain. Residues 216–245 (DKRLETSGQSRARANTNQRGPASGAQAAGA) are disordered. Polar residues predominate over residues 221 to 235 (TSGQSRARANTNQRG).

Belongs to the universal ribosomal protein uS3 family. In terms of assembly, part of the 30S ribosomal subunit. Forms a tight complex with proteins S10 and S14.

Binds the lower part of the 30S subunit head. Binds mRNA in the 70S ribosome, positioning it for translation. The polypeptide is Small ribosomal subunit protein uS3 (Hyphomonas neptunium (strain ATCC 15444)).